The chain runs to 409 residues: AP-1-like transcription factor YAP2 (409 aa).

2 short sequence motifs (bipartite nuclear localization signal) span residues 17-24 (MKKQMLLN) and 47-54 (SRRTAQNR). The tract at residues 26–64 (DGTPKRKVGRPGRKRIDSEAKSRRTAQNRAAQRAFRDRK) is disordered. The 64-residue stretch at 43–106 (SEAKSRRTAQ…KSLLSEITKY (64 aa)) folds into the bZIP domain. The interval 46 to 69 (KSRRTAQNRAAQRAFRDRKEAKMK) is basic motif. Residues 71–99 (LQERVELLEQKDAQNKTTTDFLLCSLKSL) form a leucine-zipper region. The segment at 127 to 156 (QKRENEKGTSTAVSKAAKELPSPNSDENMT) is disordered. The segment at 356 to 387 (CYHILEEISSLPKYSSLDIDDLCSELIIKAKC) is c-CRD. The Nuclear export signal signature appears at 372 to 379 (LDIDDLCS).

The protein belongs to the bZIP family. YAP subfamily. In terms of assembly, homodimer; disulfide-linked, upon oxidation. Interacts in the nucleus with the nuclear export protein CRM1. Interacts with RCK1. Depending on the oxidative stress inducing agent, CAD1/YAP2 can undergo two distinct conformational changes, both through oxidation of cysteine residues, and both masking the nuclear export signal, thus abolishing nuclear export by CRM1/exportin 1. Peroxide stress induces the formation of possible intramolecular disulfide bonds as well as intermolcular disulfide within a homodimer. Cadmium may bind directly to specific cysteine residues (Cys-391 and either Cys-356 or Cys-387) in the c-CRD.

The protein localises to the cytoplasm. Its subcellular location is the nucleus. Functionally, transcription activator involved in oxidative stress response and cadmium resistance. Regulates the transcription of genes overrepresented for the function of stabilizing proteins including the inducible Hsp90-family protein HSP82. Preferentially binds to promoters with the core binding site 5'-TTA[CG]TAA-3'. Activity of the transcription factor is controlled through oxidation of specific cysteine residues resulting in the alteration of its subcellular location. Activation by alkyl hydroperoxides or cadmium induces nuclear accumulation and as a result CAD1/YAP2 transcriptional activity. This is AP-1-like transcription factor YAP2 from Saccharomyces cerevisiae (strain ATCC 204508 / S288c) (Baker's yeast).